Here is an 87-residue protein sequence, read N- to C-terminus: Small ribosomal subunit protein eS21 (87 aa).

This sequence belongs to the eukaryotic ribosomal protein eS21 family. As to quaternary structure, component of the small ribosomal subunit. Mature ribosomes consist of a small (40S) and a large (60S) subunit. The 40S subunit contains about 33 different proteins and 1 molecule of RNA (18S). The 60S subunit contains about 49 different proteins and 3 molecules of RNA (25S, 5.8S and 5S).

It localises to the cytoplasm. In terms of biological role, required for the processing of the 20S rRNA-precursor to mature 18S rRNA in a late step of the maturation of 40S ribosomal subunits. Has a physiological role leading to 18S rRNA stability. The chain is Small ribosomal subunit protein eS21 (RPS21) from Kluyveromyces lactis (strain ATCC 8585 / CBS 2359 / DSM 70799 / NBRC 1267 / NRRL Y-1140 / WM37) (Yeast).